The following is a 207-amino-acid chain: MDTLIREFDVALRAIAGATRAERANPADRLAPETEQMNPEERRHVSGLMRINHVGEVCAQALYQAQKLTARTPAVRAQMDAAAKEEEDHLAWCADRLRELGSRPSLLNPVWYAGAFAIGVLAGRAGDKVSLGFVAETERQVEHHLTSHLDRLPTTDSRSRAILEQMRDDEVRHGDAARNAGGIPLPGPVRALMQVASRVMTTTAYRI.

A compositionally biased stretch (basic and acidic residues) spans 22–32 (ERANPADRLAP). Residues 22–41 (ERANPADRLAPETEQMNPEE) form a disordered region. Fe cation contacts are provided by Glu-56, Glu-86, His-89, Glu-138, Glu-170, and His-173.

Belongs to the COQ7 family. Fe cation serves as cofactor.

It is found in the cell membrane. It carries out the reaction a 5-methoxy-2-methyl-3-(all-trans-polyprenyl)benzene-1,4-diol + AH2 + O2 = a 3-demethylubiquinol + A + H2O. It functions in the pathway cofactor biosynthesis; ubiquinone biosynthesis. In terms of biological role, catalyzes the hydroxylation of 2-nonaprenyl-3-methyl-6-methoxy-1,4-benzoquinol during ubiquinone biosynthesis. This Cupriavidus metallidurans (strain ATCC 43123 / DSM 2839 / NBRC 102507 / CH34) (Ralstonia metallidurans) protein is 3-demethoxyubiquinol 3-hydroxylase.